Here is an 83-residue protein sequence, read N- to C-terminus: uncharacterized protein (83 aa).

3 helical membrane passes run 5–22, 32–49, and 56–78; these read VLLSIIIFLGINQNVYSI, IIKIVIILGIVILIFSPA, and IGTILGLACAYFTYKYIIPIFIA.

It is found in the cell membrane. This is an uncharacterized protein from Rickettsia prowazekii (strain Madrid E).